Consider the following 188-residue polypeptide: Glutamyl endopeptidase 2 (188 aa).

Cys14 and Cys34 are disulfide-bonded. Residues His33, Asp62, and Ser143 each act as charge relay system in the active site. The cysteines at positions 137 and 163 are disulfide-linked.

It belongs to the peptidase S1 family. In terms of assembly, monomer.

The enzyme catalyses Preferential cleavage: -Glu-|-Xaa- &gt;&gt; -Asp-|-Xaa-. Preference for Pro or Leu at P2 and Phe at P3. Cleavage of -Glu-|-Asp- and -Glu-|-Pro- bonds is slow.. Preferentially cleaves peptide bonds on the carboxyl-terminal side of glutamate. The sequence is that of Glutamyl endopeptidase 2 (sprE) from Streptomyces griseus.